The primary structure comprises 127 residues: Putative iron-sulfur cluster insertion protein ErpA (127 aa).

Over residues 1 to 14 (MNTPFNDGSGQTDP) the composition is skewed to polar residues. A disordered region spans residues 1-20 (MNTPFNDGSGQTDPMTDIPT). Residues cysteine 55, cysteine 119, and cysteine 121 each contribute to the iron-sulfur cluster site.

This sequence belongs to the HesB/IscA family. Homodimer. It depends on iron-sulfur cluster as a cofactor.

In terms of biological role, required for insertion of 4Fe-4S clusters. This chain is Putative iron-sulfur cluster insertion protein ErpA, found in Nitrosospira multiformis (strain ATCC 25196 / NCIMB 11849 / C 71).